The sequence spans 581 residues: MSHSDYNFDIEQNAFEKEAPKVSIERKGDVVEEEVIATGEVENYAEPKSRNFLQRFFDDFKPALTTRGDGVALKRKLTSRHMQMISVGGAIGSGLYVGSGSAFADGGPASVIINYILIGIMMIFVIYALGELAIAYPVAGSFNTYATRFIDPAWGFAVSWNYFLNYFVTCPLELTTCAITFKFWTEINSAAWISIFLAVVIVINLFGVRAYGEVEFILSTIKVIATVGFIILAIIINCGGVPTDHRGYIGGSIIKQKPFRHGFKGFCSVFTTAAFSFSGTEIIGLAAAEVGNPRKSVPSAVKQVFWRIAIFYVVSLILIGLLVSPDDPRLMGNGDVSVSPFVLAIQEANIKGLPSVFNAVIIISVVSVTNSTTYTAARTLQGMATLKQAPKFFSYTDRVGRPLIAMVVVLLFGFFAYINEADKNGSDISDTVFDWLLAISGLSSFFTWGSICLSHIMFRLAFKKQGHSLKELGFVSPMGIWGSVIGLGFNILCLMAEFYVSLFLIGGSPNANDFFQGYLAACIALAFFIGYKIYDRSHIPSLDKLDIDTGLKTYDNQDEEKEEYSSKGPLNILKKAWNAVC.

12 consecutive transmembrane segments (helical) span residues 84-104, 109-129, 149-169, 187-207, 216-236, 266-286, 304-324, 348-368, 399-419, 432-452, 485-505, and 514-534; these read MISV…SAFA, ASVI…IYAL, FIDP…YFVT, INSA…NLFG, FILS…AIII, FCSV…IGLA, VFWR…LLVS, ANIK…VVSV, VGRP…AYIN, VFDW…GSIC, IGLG…LFLI, and FFQG…YKIY.

This sequence belongs to the amino acid-polyamine-organocation (APC) superfamily.

It localises to the membrane. This is an uncharacterized protein from Schizosaccharomyces pombe (strain 972 / ATCC 24843) (Fission yeast).